The sequence spans 433 residues: 3-phosphoshikimate 1-carboxyvinyltransferase (433 aa).

3-phosphoshikimate-binding residues include K23, S24, and R28. K23 contributes to the phosphoenolpyruvate binding site. Phosphoenolpyruvate-binding residues include G95 and R123. 3-phosphoshikimate contacts are provided by S167, Q169, D317, and K344. Q169 serves as a coordination point for phosphoenolpyruvate. D317 functions as the Proton acceptor in the catalytic mechanism. 2 residues coordinate phosphoenolpyruvate: R348 and R390.

It belongs to the EPSP synthase family. Monomer.

The protein resides in the cytoplasm. The enzyme catalyses 3-phosphoshikimate + phosphoenolpyruvate = 5-O-(1-carboxyvinyl)-3-phosphoshikimate + phosphate. The protein operates within metabolic intermediate biosynthesis; chorismate biosynthesis; chorismate from D-erythrose 4-phosphate and phosphoenolpyruvate: step 6/7. Its function is as follows. Catalyzes the transfer of the enolpyruvyl moiety of phosphoenolpyruvate (PEP) to the 5-hydroxyl of shikimate-3-phosphate (S3P) to produce enolpyruvyl shikimate-3-phosphate and inorganic phosphate. The sequence is that of 3-phosphoshikimate 1-carboxyvinyltransferase from Staphylococcus epidermidis (strain ATCC 35984 / DSM 28319 / BCRC 17069 / CCUG 31568 / BM 3577 / RP62A).